The chain runs to 173 residues: MARMNRPAPVEVSYKHMRFLITHNPTNATLSTFIEDLKKYGATTVVRVCEVTYDKTPLEKDGITVVDWPFDDGAPPPGKVVEDWLSLVKAKFCEAPGSCVAVHCVAGLGRAPVLVALALIESGMKYEDAIQFIRQKRRGAINSKQLTYLEKYRPKQRLRFKDPHTHKTRCCVM.

The 154-residue stretch at 8-161 (APVEVSYKHM…YRPKQRLRFK (154 aa)) folds into the Tyrosine-protein phosphatase domain. Cysteine 49 and cysteine 104 are joined by a disulfide. Catalysis depends on aspartate 72, which acts as the Proton donor. The Phosphocysteine intermediate role is filled by cysteine 104. Arginine 110 serves as a coordination point for substrate. Cysteine 170 is subject to Cysteine methyl ester. A lipid anchor (S-farnesyl cysteine) is attached at cysteine 170. Residues 171 to 173 (CVM) constitute a propeptide, removed in mature form.

Belongs to the protein-tyrosine phosphatase family. Interacts with tubulin. Farnesylated. Farnesylation is required for membrane targeting. In terms of tissue distribution, mainly expressed in cardiomyocytes and skeletal muscle; also found in pancreas. Consistently overexpressed in colon cancer metastasis.

The protein resides in the cell membrane. It localises to the early endosome. The catalysed reaction is O-phospho-L-tyrosyl-[protein] + H2O = L-tyrosyl-[protein] + phosphate. With respect to regulation, inhibited by sodium orthovanadate and peroxovanadium compounds, and by pentamidine. Its function is as follows. Protein tyrosine phosphatase which stimulates progression from G1 into S phase during mitosis. Enhances cell proliferation, cell motility and invasive activity, and promotes cancer metastasis. May be involved in the progression of cardiac hypertrophy by inhibiting intracellular calcium mobilization in response to angiotensin II. This is Protein tyrosine phosphatase type IVA 3 (PTP4A3) from Homo sapiens (Human).